Here is a 364-residue protein sequence, read N- to C-terminus: Glycerol dehydrogenase (364 aa).

Positions 37, 92, 93, 114, and 117 each coordinate NAD(+). Asp-119 serves as a coordination point for glycerol. NAD(+) contacts are provided by Ser-123, Leu-125, and Tyr-129. Residues Asp-169, His-252, and His-269 each coordinate glycerol. Zn(2+) is bound by residues Asp-169, His-252, and His-269.

Belongs to the iron-containing alcohol dehydrogenase family. Zn(2+) is required as a cofactor.

It carries out the reaction glycerol + NAD(+) = dihydroxyacetone + NADH + H(+). Its pathway is polyol metabolism; glycerol fermentation; glycerone phosphate from glycerol (oxidative route): step 1/2. Its function is as follows. Catalyzes the NAD-dependent oxidation of glycerol to dihydroxyacetone (glycerone). The sequence is that of Glycerol dehydrogenase (gldA) from Thermotoga maritima (strain ATCC 43589 / DSM 3109 / JCM 10099 / NBRC 100826 / MSB8).